Consider the following 1489-residue polypeptide: MSTIHQVNEMNSRVGEKPACCIGAARGHCTAHCPRIEDVLYSQRKGKTNKGAQRWRCKACGTKWTSKGIIIQPPVVPDTIVNSIGFGNGPEEISMEQLRANARPYKKTKTGDNILQTSPFPSLFGNSIGMGLGGNNNNINNNNNSNGSNSSNNSHNGGSSPSGSPIPSPPSPVSFLQRNSNVFVPILPQSNGNNINNNNNNNSNSNSNNINSNSSNSMQLQNNNNNNGQLRSSSSSLSLSSSSSQLNSSSNGNGSSRNLLTSQKSAQSLIGNINNNNNNNNIINNNSNNNTNNNNNIMNGTTTSTTKPVVVGGPMQILNSVVNNSPTSSKPILSSSSQNLLYNSSGSIPQPSQSPQNNNNTTINNNNNTTNNNNNNNNSNNNNNSNNNNNNSNNNNINNVANGTPRPSLQTSRLQGKLPSPQQYNTSPSHQQYPSPKNNNNSNNIIPIQSTYGQPTPPPTKPPVSSKAPAVYHNVRVPSPNTTVDNNNNNNNNNNNNNNNNNNNNNNNNNNNSNNNNNSNNNNNNINNNNNNNNNSNNNNNGNSNNNNNNNSNYQQQHQYFSPNQNYIQQQVQAVQTQQAQHILAQQQAQAQQQYIQQLQLQQQTLAHAQSQAAHQAQTLTHSRHNDLLSPIDSQIWAPIQYSWIQTHYNPSSSLLECLKRLINSVVVFSNELPVDQRLKMINFLTTLSSPSSESQYNTNASKQMLNCIDNSVFNITKHYQMLYQSISKHYSMMEDSFIPLTEVYFDENEINKFIHFSDQFKIIEEQFEFILRELSSIRDTLIIKRENIEKNIIESSKFLNNSSNNDNGIEEIGLEQAKQDTTRLLESLAPLETTLNSMEIKFKSIQKEISMVIRVFSFFELLYNIHINCHQTIVEKHSRQLSTYMIDVIQQSLYNCDVISVAYNRLKTGLFNSNNNNNNNNNNNNNNNEEDDQLIDTTNPFINKLSDLLSKYENISKNNNNNNNNNNNNNNNNNNNNNNNNNNNNNNRNRDRDREFERDNNSNNNNNNIEKERNRNNRIRDRDNMDIDNISSFISNNQQQHIGQSQSVQQSSQLPKERKVMALYHTTCLDHLVPDDHPESPKRLSSVIKAINDFSRQSDRLIIKNDPEEINDKWILTVHSPEYLRLLEDLTEKLDANEIRPLNVNNDGASTGINQFSTSTPITTTGTATVTPGSTTSSTNGEQCEDGDTFVSKLSLHAAKRSAGATCQAIDNVMKGNVTSAFVAARPPGHHAGRDGLTSGTSSQGFCLLNHVCIGAKYAQLKYNLDKIAIIDFDVHHGNGTEEILSNDQGFYFLSIHMFEEGFYPGSGGGVGSIGVVNLNEFNEQNDYDDDDNNNDVNNNNNNNNNNNNNNNNNNNNKNNNNNNSNSITQQSTITNNSNCKGNIVNIPLDPKSSASSFLKAFSIIIDKLNDYQPELILISCGFDAHMEDHLASLCLLEENYVEITRSLRRVADRWCKGRLVSILEGGYNINALRQCTIAHLSALSEDD.

4 stretches are compositionally biased toward low complexity: residues 135–163, 190–259, 281–306, and 325–399; these read NNNN…SPSG, SNGN…SRNL, NIIN…TSTT, and SPTS…NINN. Disordered stretches follow at residues 135–259, 281–556, 915–935, 955–1024, and 1151–1185; these read NNNN…SRNL, NIIN…NYQQ, NNNN…DDQL, NISK…RDRD, and STGI…GEQC. Residues 400–430 are compositionally biased toward polar residues; that stretch reads VANGTPRPSLQTSRLQGKLPSPQQYNTSPSH. Composition is skewed to low complexity over residues 431 to 450, 486 to 553, 915 to 928, and 959 to 988; these read QQYP…PIQS, NNNN…NNSN, and NNNN…NNNN. 2 stretches are compositionally biased toward basic and acidic residues: residues 989–1001 and 1010–1024; these read RNRD…ERDN and IEKE…RDRD. The span at 1158–1180 shows a compositional bias: low complexity; that stretch reads STSTPITTTGTATVTPGSTTSST. The active-site Proton acceptor is histidine 1232. The span at 1325–1335 shows a compositional bias: acidic residues; that stretch reads EQNDYDDDDNN. Positions 1325–1374 are disordered; sequence EQNDYDDDDNNNDVNNNNNNNNNNNNNNNNNNNNKNNNNNNSNSITQQST. Low complexity predominate over residues 1336-1367; sequence NDVNNNNNNNNNNNNNNNNNNNNKNNNNNNSN.

It belongs to the histone deacetylase family. HD type 2 subfamily.

The protein resides in the nucleus. It localises to the cytoplasm. The catalysed reaction is N(6)-acetyl-L-lysyl-[histone] + H2O = L-lysyl-[histone] + acetate. Responsible for the deacetylation of lysine residues on the N-terminal part of the core histones (H2A, H2B, H3 and H4). Histone deacetylation plays an important role in transcriptional regulation, cell cycle progression and developmental events. Histone deacetylases act via the formation of large multiprotein complexes. The chain is Type-2 histone deacetylase 1 (hdaD) from Dictyostelium discoideum (Social amoeba).